The sequence spans 26 residues: Acetyl-CoA acetyltransferase (26 aa).

Cysteine 21 (acyl-thioester intermediate) is an active-site residue.

The protein belongs to the thiolase-like superfamily. Thiolase family. In terms of assembly, homotetramer. In terms of processing, succinylation, adjacent to a coenzyme A binding site. Desuccinylated by SIRT5.

It is found in the mitochondrion. It catalyses the reaction 2 acetyl-CoA = acetoacetyl-CoA + CoA. In Sus scrofa (Pig), this protein is Acetyl-CoA acetyltransferase.